A 466-amino-acid polypeptide reads, in one-letter code: MSQGSIVQCIGAVVDIHFPRDAMPKVYDALKLDASEANGMAEDGLTFEVQQQLGDGVVRTIAMGSSDGLRRGMKVNNTGAGISVPVGMGTLGRIMDVLGRPIDEAGPIDSTELRVIHQPAPKFDELSSSVDLLETGIKVIDLICPFAKGGKVGLFGGAGVGKTVNMMELINNIAKQHAGLSVFAGVGERTREGNDFYHEMKDSNVLDKVAMVFGQMNEPPGNRLRVALTGLTMAERFRDDGRDILFFVDNIYRYTLAGTEVSALLGRMPSAVGYQPTLAEEMGRLQERITSTKVGSITSIQAVYVPADDLTDPSPATTFLHLDSTVVLSRDIASLGIYPAVDPLDSTSRQLDPQVVGEEHYSVARAVQMNLQRYKELRDIIAILGMDELSPEDKLAVSRARKIQRFLSQPFHVAEVFTGSPGKFVSLKETIKGFKGICAGEYDHLPEQAFYMVGGIEEVIEKAKTL.

156–163 (GGAGVGKT) contributes to the ATP binding site.

It belongs to the ATPase alpha/beta chains family. In terms of assembly, F-type ATPases have 2 components, CF(1) - the catalytic core - and CF(0) - the membrane proton channel. CF(1) has five subunits: alpha(3), beta(3), gamma(1), delta(1), epsilon(1). CF(0) has three main subunits: a(1), b(2) and c(9-12). The alpha and beta chains form an alternating ring which encloses part of the gamma chain. CF(1) is attached to CF(0) by a central stalk formed by the gamma and epsilon chains, while a peripheral stalk is formed by the delta and b chains.

Its subcellular location is the cell inner membrane. The enzyme catalyses ATP + H2O + 4 H(+)(in) = ADP + phosphate + 5 H(+)(out). Its function is as follows. Produces ATP from ADP in the presence of a proton gradient across the membrane. The catalytic sites are hosted primarily by the beta subunits. This is ATP synthase subunit beta from Dechloromonas aromatica (strain RCB).